The following is a 205-amino-acid chain: High frequency lysogenization protein HflD homolog (205 aa).

Belongs to the HflD family.

The protein localises to the cytoplasm. It localises to the cell inner membrane. The sequence is that of High frequency lysogenization protein HflD homolog from Aliivibrio fischeri (strain ATCC 700601 / ES114) (Vibrio fischeri).